The primary structure comprises 77 residues: MSNIEERVRNIIVEQLGVQLEEVKNEASFVDDLGADSLDTVELVMALEEEFDTEIPDEEAEKITTVQSAIDYVVNNG.

The 76-residue stretch at Ser2–Gly77 folds into the Carrier domain. Position 37 is an O-(pantetheine 4'-phosphoryl)serine (Ser37).

This sequence belongs to the acyl carrier protein (ACP) family. In terms of processing, 4'-phosphopantetheine is transferred from CoA to a specific serine of apo-ACP by AcpS. This modification is essential for activity because fatty acids are bound in thioester linkage to the sulfhydryl of the prosthetic group.

The protein localises to the cytoplasm. It functions in the pathway lipid metabolism; fatty acid biosynthesis. Its function is as follows. Carrier of the growing fatty acid chain in fatty acid biosynthesis. In Psychromonas ingrahamii (strain DSM 17664 / CCUG 51855 / 37), this protein is Acyl carrier protein.